The chain runs to 202 residues: MARSRVPAAASPAKLGPLLSRRFFARSVHEVAPELIGATLLVAGVGGLIVEVEAYHHTDPAAHSYGGETPRNRVMFGPPGFAYVYRSYGIHWCVNFVCEAEGSASAVLIRALAPTHGLGVMRKHRGLDDERSLCSGPGKLTQALGITIAHNGAPLDIEPFAIHRRTVEPDIGTGPRIGISKAIELPWRYGLRRSRLVSKPFK.

This sequence belongs to the DNA glycosylase MPG family.

In Rhodopseudomonas palustris (strain BisB5), this protein is Putative 3-methyladenine DNA glycosylase.